The chain runs to 228 residues: UPF0173 metal-dependent hydrolase lwe1590 (228 aa).

This sequence belongs to the UPF0173 family.

The protein is UPF0173 metal-dependent hydrolase lwe1590 of Listeria welshimeri serovar 6b (strain ATCC 35897 / DSM 20650 / CCUG 15529 / CIP 8149 / NCTC 11857 / SLCC 5334 / V8).